Here is an 838-residue protein sequence, read N- to C-terminus: Protein translocase subunit SecA 1 (838 aa).

ATP is bound by residues Gln-85, 103–107 (GEGKT), and Asp-493. Zn(2+)-binding residues include Cys-823, Cys-825, Cys-834, and His-835.

The protein belongs to the SecA family. As to quaternary structure, monomer and homodimer. Part of the essential Sec protein translocation apparatus which comprises SecA, SecYEG and auxiliary proteins SecDF. Other proteins may also be involved. It depends on Zn(2+) as a cofactor.

The protein localises to the cell membrane. The protein resides in the cytoplasm. It carries out the reaction ATP + H2O + cellular proteinSide 1 = ADP + phosphate + cellular proteinSide 2.. Part of the Sec protein translocase complex. Interacts with the SecYEG preprotein conducting channel. Has a central role in coupling the hydrolysis of ATP to the transfer of proteins into and across the cell membrane, serving as an ATP-driven molecular motor driving the stepwise translocation of polypeptide chains across the membrane. The protein is Protein translocase subunit SecA 1 of Streptococcus gordonii.